The primary structure comprises 236 residues: Purine nucleoside phosphorylase DeoD-type 2 (236 aa).

Residue His-5 coordinates a purine D-ribonucleoside. Residues Gly-21, Arg-25, Arg-44, and 88–91 contribute to the phosphate site; that span reads RVGS. A purine D-ribonucleoside contacts are provided by residues 180 to 182 and 204 to 205; these read DME and SD. The Proton donor role is filled by Asp-205.

Belongs to the PNP/UDP phosphorylase family. Homohexamer; trimer of homodimers.

The enzyme catalyses a purine D-ribonucleoside + phosphate = a purine nucleobase + alpha-D-ribose 1-phosphate. The catalysed reaction is a purine 2'-deoxy-D-ribonucleoside + phosphate = a purine nucleobase + 2-deoxy-alpha-D-ribose 1-phosphate. Functionally, catalyzes the reversible phosphorolytic breakdown of the N-glycosidic bond in the beta-(deoxy)ribonucleoside molecules, with the formation of the corresponding free purine bases and pentose-1-phosphate. The polypeptide is Purine nucleoside phosphorylase DeoD-type 2 (Photobacterium profundum (strain SS9)).